The sequence spans 148 residues: Large ribosomal subunit protein bL9 (148 aa).

Belongs to the bacterial ribosomal protein bL9 family.

Binds to the 23S rRNA. The chain is Large ribosomal subunit protein bL9 from Acinetobacter baumannii (strain AB307-0294).